We begin with the raw amino-acid sequence, 407 residues long: Putative membrane protein 047R (407 aa).

The segment at 265–337 is disordered; the sequence is INCVFKPDPP…PPKPTPPPPI (73 aa). A compositionally biased stretch (pro residues) spans 271 to 337; sequence PDPPPQPKPQ…PPKPTPPPPI (67 aa). 2 helical membrane-spanning segments follow: residues 355–372 and 385–403; these read NWIMLTFVGLVLALVIYP and NAAIAVLVGLNAFGLQSYV.

This sequence belongs to the IIV-6 337L family.

Its subcellular location is the virion membrane. In Aedes vexans (Inland floodwater mosquito), this protein is Putative membrane protein 047R.